The primary structure comprises 328 residues: Integrator complex subunit 12 (328 aa).

The sufficient for binding to IntS1 and IntS9 and for 3'-end snRNA processing stretch occupies residues 1–45 (MAANIAAAAAAAQEVDPVLKKAIKLLHSSNPTSAAELRLLLDEAL). The segment at 128–185 (DLNCCVCGEMVFTATNRLIECSKCGAMYHQECHKPPITKEEAADDQEQNWQCDTCCNK) adopts a PHD-type zinc-finger fold. Composition is skewed to low complexity over residues 215 to 233 (KAKS…NSSS), 241 to 264 (SSST…SSSS), 274 to 283 (KSTAASSLSA), and 292 to 311 (SSGT…SKSS). A disordered region spans residues 215–328 (KAKSSVASSR…GSSSKRRSKQ (114 aa)).

It belongs to the Integrator subunit 12 family. In terms of assembly, belongs to the multiprotein complex Integrator, at least composed of IntS1, IntS2, IntS3, IntS4, omd/IntS5, IntS6, defl/IntS7, IntS8, IntS9, IntS10, IntS11, IntS12, asun/IntS13, IntS14 and IntS15. The core complex associates with protein phosphatase 2A subunits mts/PP2A and Pp2A-29B, to form the Integrator-PP2A (INTAC) complex. Within the complex, interacts with IntS1 and IntS9. Interaction with IntS1 is likely to be important for promoting 3'-end processing of snRNAs.

The protein resides in the nucleus. Its function is as follows. Component of the integrator complex, a multiprotein complex that terminates RNA polymerase II (Pol II) transcription in the promoter-proximal region of genes. The integrator complex provides a quality checkpoint during transcription elongation by driving premature transcription termination of transcripts that are unfavorably configured for transcriptional elongation: the complex terminates transcription by (1) catalyzing dephosphorylation of the C-terminal domain (CTD) of Pol II subunit Polr2A/Rbp1 and Spt5, and (2) degrading the exiting nascent RNA transcript via endonuclease activity. The integrator complex is also involved in the 3'-end processing of the U7 snRNA, and also the spliceosomal snRNAs U1, U2, U4 and U5. Required for the normal expression of the Integrator complex component IntS1. The sequence is that of Integrator complex subunit 12 from Drosophila melanogaster (Fruit fly).